The chain runs to 423 residues: Mannose-6-phosphate isomerase (423 aa).

The residue at position 2 (Ala2) is an N-acetylalanine. Phosphoserine is present on residues Ser102 and Ser108. Zn(2+) contacts are provided by Gln110, His112, Glu137, and His276. Residue Arg295 is part of the active site.

It belongs to the mannose-6-phosphate isomerase type 1 family. Requires Zn(2+) as cofactor.

Its subcellular location is the cytoplasm. The enzyme catalyses D-mannose 6-phosphate = D-fructose 6-phosphate. The protein operates within nucleotide-sugar biosynthesis; GDP-alpha-D-mannose biosynthesis; alpha-D-mannose 1-phosphate from D-fructose 6-phosphate: step 1/2. Functionally, isomerase that catalyzes the interconversion of fructose-6-P and mannose-6-P and has a critical role in the supply of D-mannose derivatives required for many eukaryotic glycosylation reactions. This Macaca fascicularis (Crab-eating macaque) protein is Mannose-6-phosphate isomerase (MPI).